Reading from the N-terminus, the 263-residue chain is Ribonuclease HII (263 aa).

In terms of domain architecture, RNase H type-2 spans 71–262 (QAIAGIDEVG…VKSMCCDSTN (192 aa)). A divalent metal cation is bound by residues Asp-77, Glu-78, and Asp-172.

Belongs to the RNase HII family. Mn(2+) serves as cofactor. The cofactor is Mg(2+).

The protein resides in the cytoplasm. The enzyme catalyses Endonucleolytic cleavage to 5'-phosphomonoester.. Its function is as follows. Endonuclease that specifically degrades the RNA of RNA-DNA hybrids. This is Ribonuclease HII from Streptococcus pyogenes serotype M5 (strain Manfredo).